The primary structure comprises 493 residues: Galactose-1-phosphate uridylyltransferase (493 aa).

It belongs to the galactose-1-phosphate uridylyltransferase type 2 family.

Its subcellular location is the cytoplasm. It carries out the reaction alpha-D-galactose 1-phosphate + UDP-alpha-D-glucose = alpha-D-glucose 1-phosphate + UDP-alpha-D-galactose. It participates in carbohydrate metabolism; galactose metabolism. The polypeptide is Galactose-1-phosphate uridylyltransferase (Streptococcus salivarius).